A 174-amino-acid chain; its full sequence is Beta-lactoglobulin (174 aa).

A signal peptide spans 1–18; sequence MKFLLLTVGLALIGAIQA. 2 disulfides stabilise this stretch: C79/C172 and C122/C134.

Belongs to the calycin superfamily. Lipocalin family. In terms of assembly, monomer.

It localises to the secreted. Lactoglobulin is the primary component of whey, it binds retinol and is probably involved in the transport of that molecule. In Notamacropus eugenii (Tammar wallaby), this protein is Beta-lactoglobulin (LGB).